The sequence spans 75 residues: Exodeoxyribonuclease 7 small subunit (75 aa).

The protein belongs to the XseB family. Heterooligomer composed of large and small subunits.

The protein resides in the cytoplasm. It catalyses the reaction Exonucleolytic cleavage in either 5'- to 3'- or 3'- to 5'-direction to yield nucleoside 5'-phosphates.. Functionally, bidirectionally degrades single-stranded DNA into large acid-insoluble oligonucleotides, which are then degraded further into small acid-soluble oligonucleotides. The sequence is that of Exodeoxyribonuclease 7 small subunit from Listeria innocua serovar 6a (strain ATCC BAA-680 / CLIP 11262).